The primary structure comprises 314 residues: MRSYSLIAPGKINLYLEIIGDRPDGYHELAMVLQSISLADKIHIRSIGIETIVVRCDHPLVPQDVDNIAYRAASLMSKEFPEVFARYGGVEITINKYIPMAAGLAGGSTNAAAVLVGLDLMWELGLTHRELQELGARLGSDVPFCIGGGTALGTRRGEILSPLPNLDHIYVVLAKYKNLSISTPWAYKTYRQKFGHTYISDTESQKSSRQRVHSGPMVSAIVEHNYKEVGELLHNDLEKVALSEYPQLLKLREAFASENVLGTMMSGSGPTMFALTESQSQAEEVRAAVKEKMADPDLEFWIAQFNSSGISIAH.

Lys11 is a catalytic residue. 99 to 109 is an ATP binding site; it reads PMAAGLAGGST. The active site involves Asp141.

It belongs to the GHMP kinase family. IspE subfamily.

It carries out the reaction 4-CDP-2-C-methyl-D-erythritol + ATP = 4-CDP-2-C-methyl-D-erythritol 2-phosphate + ADP + H(+). It participates in isoprenoid biosynthesis; isopentenyl diphosphate biosynthesis via DXP pathway; isopentenyl diphosphate from 1-deoxy-D-xylulose 5-phosphate: step 3/6. In terms of biological role, catalyzes the phosphorylation of the position 2 hydroxy group of 4-diphosphocytidyl-2C-methyl-D-erythritol. The polypeptide is 4-diphosphocytidyl-2-C-methyl-D-erythritol kinase (Trichodesmium erythraeum (strain IMS101)).